A 292-amino-acid chain; its full sequence is MPSLKDLRNRIASVKATQKITKAMQMVAAAKLRRAQEAAEAARPYSQRMGAVLANIAQNVSGEDAPALMVGTGKDDVHLLVVCTAERGLCGGFNSQIARLARDHARKLLAEGKTVKIITVGKKGADILRREFSALLHDHVDLREVKQLAFVHADQIGHKIIKLFEEGAFDVCTLFYSEFKSVISQVPTAQQLIPASADNEAEMETAGDAIYEYEPDPAAILSTLIPRNISVQIFRALLENVAGEMGAKMSAMDNATRNAGDMINKLSITYNRQRQAQITKELIEIISGAEAL.

This sequence belongs to the ATPase gamma chain family. F-type ATPases have 2 components, CF(1) - the catalytic core - and CF(0) - the membrane proton channel. CF(1) has five subunits: alpha(3), beta(3), gamma(1), delta(1), epsilon(1). CF(0) has three main subunits: a, b and c.

The protein resides in the cell inner membrane. In terms of biological role, produces ATP from ADP in the presence of a proton gradient across the membrane. The gamma chain is believed to be important in regulating ATPase activity and the flow of protons through the CF(0) complex. The sequence is that of ATP synthase gamma chain from Brucella ovis (strain ATCC 25840 / 63/290 / NCTC 10512).